The following is a 362-amino-acid chain: GDSL esterase/lipase At5g45670 (362 aa).

The N-terminal stretch at 1–23 is a signal peptide; sequence MARMSLMIMMIMVAVTMINIAKS. S36 (nucleophile) is an active-site residue. Catalysis depends on residues D326 and H329.

Belongs to the 'GDSL' lipolytic enzyme family.

It is found in the secreted. This is GDSL esterase/lipase At5g45670 from Arabidopsis thaliana (Mouse-ear cress).